The chain runs to 481 residues: tRNA pseudouridine(38/39) synthase (481 aa).

At alanine 2 the chain carries N-acetylalanine. Residue aspartate 119 is the Nucleophile of the active site. Residue tyrosine 196 participates in substrate binding.

This sequence belongs to the tRNA pseudouridine synthase TruA family.

The protein localises to the nucleus. The catalysed reaction is uridine(38/39) in tRNA = pseudouridine(38/39) in tRNA. Its function is as follows. Formation of pseudouridine at position 39 in the anticodon stem and loop of transfer RNAs. Also acts on position 38, but much less efficiently. The chain is tRNA pseudouridine(38/39) synthase (Pus3) from Mus musculus (Mouse).